Reading from the N-terminus, the 288-residue chain is uncharacterized protein (288 aa).

The next 4 membrane-spanning stretches (helical) occupy residues 43–63, 190–210, 243–263, and 265–285; these read LFTL…NYII, LFIF…FLLE, GIPI…SILI, and LLQM…NKSL.

Its subcellular location is the cell membrane. This is an uncharacterized protein from Rickettsia prowazekii (strain Madrid E).